Consider the following 338-residue polypeptide: MNDISSQTPGILATAREQVLQRGEGLSQEQVLEVLNLPDEQIEELLALAHEVRVKWCGEEVEIEGIVSLKTGGCPEDCHFCSQSGLFETPVRSVWLDIPLLVEQAKQTAKTGATEFCIVAAVKGPDENLMRQLEVAVEAIRAEVDINVAASVGILTQEQVDRLTAIGVHRYNHNLETSRSNFPNVVTTHSWEERYETLKMVKESGMEVCCGGILGMGETREQRAEFAAELASLEPHEVPMNFLDPRPGTPFADYPVMAGSEALKTIGAFRLALPRTTLRFAGGRELTLEDFGTEAGLLGGINGMIVGNYLTTLGRDQEADVDMLNRLSLPIKALNRSV.

The Radical SAM core domain occupies 59–284 (EEVEIEGIVS…RTTLRFAGGR (226 aa)). [4Fe-4S] cluster is bound by residues Cys74, Cys78, and Cys81. The [2Fe-2S] cluster site is built by Cys117, Cys209, and Arg279.

Belongs to the radical SAM superfamily. Biotin synthase family. In terms of assembly, homodimer. It depends on [4Fe-4S] cluster as a cofactor. Requires [2Fe-2S] cluster as cofactor.

The enzyme catalyses (4R,5S)-dethiobiotin + (sulfur carrier)-SH + 2 reduced [2Fe-2S]-[ferredoxin] + 2 S-adenosyl-L-methionine = (sulfur carrier)-H + biotin + 2 5'-deoxyadenosine + 2 L-methionine + 2 oxidized [2Fe-2S]-[ferredoxin]. Its pathway is cofactor biosynthesis; biotin biosynthesis; biotin from 7,8-diaminononanoate: step 2/2. Its function is as follows. Catalyzes the conversion of dethiobiotin (DTB) to biotin by the insertion of a sulfur atom into dethiobiotin via a radical-based mechanism. This chain is Biotin synthase, found in Corynebacterium urealyticum (strain ATCC 43042 / DSM 7109).